Consider the following 147-residue polypeptide: Hemoglobin subunit beta (147 aa).

A Globin domain is found at 3–147 (HWTPEEKQYI…VAHALALGYH (145 aa)). His-64 and His-93 together coordinate heme b.

It belongs to the globin family. Heterotetramer of two alpha-D chains and two beta chains. In terms of tissue distribution, red blood cells.

In terms of biological role, involved in oxygen transport from the lung to the various peripheral tissues. The sequence is that of Hemoglobin subunit beta (HBB) from Chelonoidis niger (Galapagos giant tortoise).